A 307-amino-acid chain; its full sequence is Mitochondrial glycine transporter (307 aa).

3 Solcar repeats span residues 8 to 87 (PRNS…MRSS), 115 to 199 (LTMY…SKQL), and 221 to 305 (TSTT…LVKR). Helical transmembrane passes span 14-39 (LIGG…TRIQ), 62-88 (GTLP…RSSL), 121-146 (LLTG…VRYE), 174-197 (GFGA…EKSK), 225-251 (VNTT…KTRM), and 280-298 (GLSM…AWGI).

Belongs to the mitochondrial carrier (TC 2.A.29) family. SLC25A38 subfamily.

It localises to the mitochondrion inner membrane. It carries out the reaction glycine(in) = glycine(out). Its function is as follows. Mitochondrial glycine transporter that imports glycine into the mitochondrial matrix. Plays an important role in providing glycine for the first enzymatic step in heme biosynthesis, the condensation of glycine with succinyl-CoA to produce 5-aminolevulinate (ALA) in the mitochondrial matrix. The polypeptide is Mitochondrial glycine transporter (Saccharomyces cerevisiae (strain RM11-1a) (Baker's yeast)).